The chain runs to 349 residues: Magnesium-protoporphyrin IX monomethyl ester [oxidative] cyclase (349 aa).

This sequence belongs to the AcsF family. It depends on Fe cation as a cofactor.

The protein resides in the plastid. Its subcellular location is the chloroplast. The catalysed reaction is Mg-protoporphyrin IX 13-monomethyl ester + 3 NADPH + 3 O2 + 2 H(+) = 3,8-divinyl protochlorophyllide a + 3 NADP(+) + 5 H2O. Its pathway is porphyrin-containing compound metabolism; chlorophyll biosynthesis (light-independent). In terms of biological role, catalyzes the formation of the isocyclic ring in chlorophyll biosynthesis. Mediates the cyclase reaction, which results in the formation of divinylprotochlorophyllide (Pchlide) characteristic of all chlorophylls from magnesium-protoporphyrin IX 13-monomethyl ester (MgPMME). This Porphyra purpurea (Red seaweed) protein is Magnesium-protoporphyrin IX monomethyl ester [oxidative] cyclase.